Reading from the N-terminus, the 343-residue chain is Phenylalanine--tRNA ligase alpha subunit (343 aa).

E256 is a binding site for Mg(2+).

Belongs to the class-II aminoacyl-tRNA synthetase family. Phe-tRNA synthetase alpha subunit type 1 subfamily. As to quaternary structure, tetramer of two alpha and two beta subunits. Mg(2+) serves as cofactor.

It is found in the cytoplasm. The enzyme catalyses tRNA(Phe) + L-phenylalanine + ATP = L-phenylalanyl-tRNA(Phe) + AMP + diphosphate + H(+). The polypeptide is Phenylalanine--tRNA ligase alpha subunit (Prosthecochloris aestuarii (strain DSM 271 / SK 413)).